Consider the following 1069-residue polypeptide: Calcium-transporting ATPase 10, plasma membrane-type (1069 aa).

Positions 1 to 29 (MSGQFNNSPRGEDKDVEAGTSSFTEYEDS) are disordered. Residue serine 2 is modified to N-acetylserine. Residues 2–180 (SGQFNNSPRG…NTYPQKKGRS (179 aa)) lie on the Cytoplasmic side of the membrane. The interaction with calmodulin stretch occupies residues 42 to 53 (ERLRRWRQAALV). A helical transmembrane segment spans residues 181 to 201 (FWRFVWEASQDLTLIILIVAA). Topologically, residues 202–219 (VASLALGIKTEGIEKGWY) are lumenal. Residues 220-240 (DGISIAFAVLLVIVVTATSDY) traverse the membrane as a helical segment. The Cytoplasmic portion of the chain corresponds to 241–369 (RQSLQFQNLN…GGETPLQVRL (129 aa)). A helical transmembrane segment spans residues 370–389 (NGVATFIGIVGLTVAGVVLF). The Lumenal segment spans residues 390–426 (VLVVRYFTGHTKNEQGGPQFIGGKTKFEHVLDDLVEI). Residues 427–444 (FTVAVTIVVVAVPEGLPL) traverse the membrane as a helical segment. The Cytoplasmic portion of the chain corresponds to 445–844 (AVTLTLAYSM…RWGRSVYANI (400 aa)). Residue aspartate 482 is the 4-aspartylphosphate intermediate of the active site. Mg(2+) contacts are provided by aspartate 789 and aspartate 793. A helical membrane pass occupies residues 845-863 (QKFIQFQLTVNVAALVINV). Residues 864–874 (VAAISAGEVPL) are Lumenal-facing. A helical transmembrane segment spans residues 875–895 (TAVQLLWVNLIMDTLGALALA). At 896–915 (TEPPTDHLMDRAPVGRREPL) the chain is on the cytoplasmic side. Residues 916–938 (ITNIMWRNLFIQAMYQVTVLLIL) form a helical membrane-spanning segment. The Lumenal portion of the chain corresponds to 939 to 951 (NFRGISILHLKSK). A helical membrane pass occupies residues 952-973 (PNAERVKNTVIFNAFVICQVFN). The Cytoplasmic segment spans residues 974 to 991 (EFNARKPDEINIFRGVLR). A helical membrane pass occupies residues 992–1013 (NHLFVGIISITIVLQVVIVEFL). Residues 1014–1023 (GTFASTTKLD) are Lumenal-facing. A helical membrane pass occupies residues 1024 to 1045 (WEMWLVCIGIGSISWPLAVIGK). At 1046–1069 (LIPVPETPVSQYFRINRWRRNSSG) the chain is on the cytoplasmic side.

This sequence belongs to the cation transport ATPase (P-type) (TC 3.A.3) family. Type IIB subfamily.

Its subcellular location is the membrane. The enzyme catalyses Ca(2+)(in) + ATP + H2O = Ca(2+)(out) + ADP + phosphate + H(+). Its activity is regulated as follows. Activated by calmodulin. This magnesium-dependent enzyme catalyzes the hydrolysis of ATP coupled with the translocation of calcium from the cytosol into the endoplasmic reticulum. The sequence is that of Calcium-transporting ATPase 10, plasma membrane-type (ACA10) from Arabidopsis thaliana (Mouse-ear cress).